Here is a 367-residue protein sequence, read N- to C-terminus: Ribosome-binding ATPase YchF (367 aa).

Positions 2–258 (LSAGIVGLPN…LKLEQRQYFL (257 aa)) constitute an OBG-type G domain. 11-16 (NVGKST) is an ATP binding site. Mg(2+) is bound by residues Ser-15 and Thr-35. The region spanning 281–364 (NLWSFFTFGK…KDGDVCNFKF (84 aa)) is the TGS domain.

Belongs to the TRAFAC class OBG-HflX-like GTPase superfamily. OBG GTPase family. YchF/OLA1 subfamily. Mg(2+) serves as cofactor.

In terms of biological role, ATPase that binds to both the 70S ribosome and the 50S ribosomal subunit in a nucleotide-independent manner. This Mycoplasma genitalium (strain ATCC 33530 / DSM 19775 / NCTC 10195 / G37) (Mycoplasmoides genitalium) protein is Ribosome-binding ATPase YchF.